The primary structure comprises 625 residues: Chaperone protein DnaK (625 aa).

A Phosphothreonine; by autocatalysis modification is found at threonine 197. Positions 598–625 (MYKKDDNASGEQSGGKKKDDDVIDAEVE) are disordered.

Belongs to the heat shock protein 70 family.

Its function is as follows. Acts as a chaperone. This is Chaperone protein DnaK from Campylobacter curvus (strain 525.92).